Here is a 420-residue protein sequence, read N- to C-terminus: Histidine--tRNA ligase (420 aa).

Belongs to the class-II aminoacyl-tRNA synthetase family. In terms of assembly, homodimer.

The protein resides in the cytoplasm. It catalyses the reaction tRNA(His) + L-histidine + ATP = L-histidyl-tRNA(His) + AMP + diphosphate + H(+). The polypeptide is Histidine--tRNA ligase (Desulforudis audaxviator (strain MP104C)).